We begin with the raw amino-acid sequence, 134 residues long: Nogalonic acid methyl ester cyclase (134 aa).

Gln-95 is a binding site for nogalaviketone. The active-site Proton donor/acceptor is Asp-111.

It belongs to the polyketide cyclase DnrD family. In terms of assembly, homotetramer. Dimer of dimers.

The catalysed reaction is nogalaviketone = methyl nogalonate. It participates in antibiotic biosynthesis. Its function is as follows. Involved in the biosynthesis of the aromatic polyketide antibiotic nogalamycin. Catalyzes the formation of nogalaviketone from nogalonic acid methyl ester (NAME), the last ring-closure step in the biosynthesis of nogalamycin. This Streptomyces nogalater protein is Nogalonic acid methyl ester cyclase.